We begin with the raw amino-acid sequence, 179 residues long: Putative FBD-associated F-box protein At3g12840 (179 aa).

Residues 14–60 form the F-box domain; the sequence is AARINDLPDDLLATVLSFVPTKDAVATSILSKRWRPIWKRAVNLESD. An FBD domain is found at 101–152; the sequence is KWKQPDFVPLSLYRSLEAFEWIGFKGREKTEKKAAFHILRNACNLKTMAITT.

This is Putative FBD-associated F-box protein At3g12840 from Arabidopsis thaliana (Mouse-ear cress).